Here is a 235-residue protein sequence, read N- to C-terminus: Phosphoribosylaminoimidazole-succinocarboxamide synthase (235 aa).

This sequence belongs to the SAICAR synthetase family.

The enzyme catalyses 5-amino-1-(5-phospho-D-ribosyl)imidazole-4-carboxylate + L-aspartate + ATP = (2S)-2-[5-amino-1-(5-phospho-beta-D-ribosyl)imidazole-4-carboxamido]succinate + ADP + phosphate + 2 H(+). Its pathway is purine metabolism; IMP biosynthesis via de novo pathway; 5-amino-1-(5-phospho-D-ribosyl)imidazole-4-carboxamide from 5-amino-1-(5-phospho-D-ribosyl)imidazole-4-carboxylate: step 1/2. In Streptococcus mutans serotype c (strain ATCC 700610 / UA159), this protein is Phosphoribosylaminoimidazole-succinocarboxamide synthase.